The sequence spans 322 residues: Solute carrier family 35 member B1 (322 aa).

The next 8 membrane-spanning stretches (helical) occupy residues 12–32 (LRLP…GILQ), 51–71 (FALT…KILI), 85–105 (WLYA…NSAL), 136–156 (YPLA…LFMY), 168–188 (TVGF…LTGV), 210–230 (LWST…WEFL), 243–263 (ILLF…TVVY), and 285–305 (VILF…LVFL). Positions 318–322 (KKTSH) match the Di-lysine motif motif.

Belongs to the nucleotide-sugar transporter family. SLC35B subfamily.

It is found in the endoplasmic reticulum membrane. It carries out the reaction ADP(in) + ATP(out) = ADP(out) + ATP(in). It catalyses the reaction UDP(out) + ATP(in) = UDP(in) + ATP(out). The catalysed reaction is UTP(out) + ATP(in) = UTP(in) + ATP(out). The enzyme catalyses dATP(out) + ATP(in) = dATP(in) + ATP(out). Its function is as follows. ATP:ADP antiporter that catalyzes the exchange of ATP and ADP across the endoplasmic reticulum (ER) membrane. Imports ATP from the cytosol to the ER lumen and exports ADP in the opposite direction. Regulates ER energy metabolism and protein biogenesis. Appears to be part of a calcium-dependent ER to cytosol low energy response axis, where calcium efflux from ER to the cytosol triggers ATP import into the ER lumen to maintain sufficient ATP supply. Provides ATP to ER chaperone HSPA5 that drives protein folding and trafficking in the ER. Can transport dATP, UTP or UDP in exchange for ATP, but the physiological relevance of this process remains to be established. The chain is Solute carrier family 35 member B1 (Slc35b1) from Rattus norvegicus (Rat).